A 251-amino-acid chain; its full sequence is Ubiquinone/menaquinone biosynthesis C-methyltransferase UbiE (251 aa).

S-adenosyl-L-methionine is bound by residues threonine 74, aspartate 95, 123-124 (NA), and serine 140.

The protein belongs to the class I-like SAM-binding methyltransferase superfamily. MenG/UbiE family.

The catalysed reaction is a 2-demethylmenaquinol + S-adenosyl-L-methionine = a menaquinol + S-adenosyl-L-homocysteine + H(+). It catalyses the reaction a 2-methoxy-6-(all-trans-polyprenyl)benzene-1,4-diol + S-adenosyl-L-methionine = a 5-methoxy-2-methyl-3-(all-trans-polyprenyl)benzene-1,4-diol + S-adenosyl-L-homocysteine + H(+). It functions in the pathway quinol/quinone metabolism; menaquinone biosynthesis; menaquinol from 1,4-dihydroxy-2-naphthoate: step 2/2. It participates in cofactor biosynthesis; ubiquinone biosynthesis. Methyltransferase required for the conversion of demethylmenaquinol (DMKH2) to menaquinol (MKH2) and the conversion of 2-polyprenyl-6-methoxy-1,4-benzoquinol (DDMQH2) to 2-polyprenyl-3-methyl-6-methoxy-1,4-benzoquinol (DMQH2). This chain is Ubiquinone/menaquinone biosynthesis C-methyltransferase UbiE, found in Citrobacter koseri (strain ATCC BAA-895 / CDC 4225-83 / SGSC4696).